The sequence spans 394 residues: Putative gustatory receptor 22a (394 aa).

Residues 1–16 lie on the Cytoplasmic side of the membrane; it reads MSQPKRIHRICKGLAR. A helical transmembrane segment spans residues 17–37; it reads FTIRATLYGSWVLGLFPFTFD. At 38–47 the chain is on the extracellular side; that stretch reads SRKRRLNRSK. N-linked (GlcNAc...) asparagine glycosylation occurs at Asn-44. Residues 48-68 form a helical membrane-spanning segment; sequence WLLAYGLVLNLTLLVLSMLPS. The Cytoplasmic portion of the chain corresponds to 69–148; that stretch reads TDDHNSVKVE…HTFNRYVIEK (80 aa). A helical membrane pass occupies residues 149–169; the sequence is GLVIILEIGSSLVLYFGIPNS. A topological domain (extracellular) is located at residue Lys-170. The helical transmembrane segment at 171–191 threads the bilayer; that stretch reads IVVYEAVCIYIVQLEVLMVVM. The Cytoplasmic segment spans residues 192–256; the sequence is HFHLAVIYIY…TAIYDIQVTL (65 aa). A helical transmembrane segment spans residues 257–277; it reads FMATLFSVNIIVGHVLVICWI. A glycan (N-linked (GlcNAc...) asparagine) is linked at Asn-278. The Extracellular portion of the chain corresponds to 278–281; it reads NITR. Residues 282-302 traverse the membrane as a helical segment; the sequence is FSLLVIFLLFPQALIINFWDL. Residues 303–361 lie on the Cytoplasmic side of the membrane; it reads WQGIAFCDLAESTGKKTSMILKLFNDMENMDQETERRVTEFTLFCSHRRLKVCHLGLLD. A helical membrane pass occupies residues 362-382; the sequence is INYEMGFRMIITNILYVVFLV. Residues 383 to 394 lie on the Extracellular side of the membrane; that stretch reads QFDYMNLKFKTD.

It belongs to the insect chemoreceptor superfamily. Gustatory receptor (GR) family. Gr22e subfamily. Expressed in neurons of the terminal external chemosensory organ of larvae.

The protein localises to the cell membrane. Functionally, probable gustatory receptor which mediates acceptance or avoidance behavior, depending on its substrates. The sequence is that of Putative gustatory receptor 22a (Gr22a) from Drosophila melanogaster (Fruit fly).